A 428-amino-acid chain; its full sequence is Aminotransferase verI (428 aa).

Lys-254 is subject to N6-(pyridoxal phosphate)lysine.

Belongs to the class-I pyridoxal-phosphate-dependent aminotransferase family. Requires pyridoxal 5'-phosphate as cofactor.

Its pathway is mycotoxin biosynthesis. Functionally, aminotransferase; part of the gene cluster that mediates the biosynthesis of 11'-deoxyverticillin A, one of the dimeric epipolythiodioxopiperazines (ETPs) from the verticillin family that act as mycotoxins. 11'-deoxyverticillin A is required for normal conidiation. The nonribosomal peptide synthetase verP is speculated to be responsible for condensation of amino acids to form the carbon skeleton of verticillin, whereas the cluster-specific tailoring enzymes are involved in further modifications leading to the production of 11'-deoxyverticillin A. The protein is Aminotransferase verI of Clonostachys rogersoniana.